The following is a 147-amino-acid chain: Thyrotropin subunit beta (147 aa).

Positions 1–20 (MELSVAMYGLLCLLFSQAVP) are cleaved as a signal peptide. 6 disulfides stabilise this stretch: C22-C72, C36-C87, C39-C127, C47-C103, C51-C105, and C108-C115. N-linked (GlcNAc...) asparagine glycosylation is present at N43.

It belongs to the glycoprotein hormones subunit beta family. As to quaternary structure, heterodimer of a common alpha chain and a unique beta chain which confers biological specificity to thyrotropin, lutropin, follitropin and gonadotropin. Pituitary gland. Higher levels seen in immature fishes than the mature fishes.

The protein resides in the secreted. Functionally, indispensable for the control of thyroid structure and metabolism. May play some role in the biological processes of the immature fishes. This chain is Thyrotropin subunit beta (tshb), found in Oncorhynchus mykiss (Rainbow trout).